We begin with the raw amino-acid sequence, 330 residues long: Aspartate--ammonia ligase (330 aa).

The protein belongs to the class-II aminoacyl-tRNA synthetase family. AsnA subfamily.

The protein resides in the cytoplasm. The catalysed reaction is L-aspartate + NH4(+) + ATP = L-asparagine + AMP + diphosphate + H(+). It functions in the pathway amino-acid biosynthesis; L-asparagine biosynthesis; L-asparagine from L-aspartate (ammonia route): step 1/1. In Shigella sonnei (strain Ss046), this protein is Aspartate--ammonia ligase.